Consider the following 477-residue polypeptide: Membrane-bound lytic murein transglycosylase F (477 aa).

Positions 1–22 (MTRFLLIIILGFLLTACQQVTV) are cleaved as a signal peptide. The non-LT domain stretch occupies residues 23–257 (DEPEFVPHQL…HLNEKYFGHV (235 aa)). The tract at residues 258-477 (KRFDYIDTRA…AGSLSPDQPK (220 aa)) is LT domain. Residue E302 is part of the active site. The segment at 446–477 (SKQPMPEDEQNDLIAEELPSMPAGSLSPDQPK) is disordered. The span at 451-460 (PEDEQNDLIA) shows a compositional bias: acidic residues.

In the N-terminal section; belongs to the bacterial solute-binding protein 3 family. It in the C-terminal section; belongs to the transglycosylase Slt family.

It localises to the cell outer membrane. It catalyses the reaction Exolytic cleavage of the (1-&gt;4)-beta-glycosidic linkage between N-acetylmuramic acid (MurNAc) and N-acetylglucosamine (GlcNAc) residues in peptidoglycan, from either the reducing or the non-reducing ends of the peptidoglycan chains, with concomitant formation of a 1,6-anhydrobond in the MurNAc residue.. Its function is as follows. Murein-degrading enzyme that degrades murein glycan strands and insoluble, high-molecular weight murein sacculi, with the concomitant formation of a 1,6-anhydromuramoyl product. Lytic transglycosylases (LTs) play an integral role in the metabolism of the peptidoglycan (PG) sacculus. Their lytic action creates space within the PG sacculus to allow for its expansion as well as for the insertion of various structures such as secretion systems and flagella. This Shewanella sp. (strain W3-18-1) protein is Membrane-bound lytic murein transglycosylase F.